A 154-amino-acid chain; its full sequence is Superoxide dismutase [Cu-Zn] (154 aa).

Residues His47, His49, and His64 each contribute to the Cu cation site. Cysteines 58 and 147 form a disulfide. Residues His64, His72, His81, and Asp84 each coordinate Zn(2+). Position 121 (His121) interacts with Cu cation. Arg144 provides a ligand contact to substrate.

It belongs to the Cu-Zn superoxide dismutase family. In terms of assembly, homodimer. Cu cation serves as cofactor. It depends on Zn(2+) as a cofactor.

It is found in the cytoplasm. It carries out the reaction 2 superoxide + 2 H(+) = H2O2 + O2. Functionally, destroys radicals which are normally produced within the cells and which are toxic to biological systems. The chain is Superoxide dismutase [Cu-Zn] (sod1) from Schizosaccharomyces pombe (strain 972 / ATCC 24843) (Fission yeast).